A 106-amino-acid polypeptide reads, in one-letter code: Protein aveugle (106 aa).

The region spanning 26 to 91 (WTVSDVLKWY…WREIVKQRLK (66 aa)) is the SAM domain.

Interacts with the SAM domain of cnk.

The protein resides in the cytoplasm. The protein localises to the membrane. Its function is as follows. Required for normal photoreceptor differentiation between Ras and Raf for EGFR signaling in the eye and for mitogen-activated protein kinase phosphorylation. Probably acts together with Cnk to promote Raf activation, perhaps by recruiting an activating kinase. The polypeptide is Protein aveugle (ave) (Drosophila melanogaster (Fruit fly)).